Reading from the N-terminus, the 115-residue chain is Pro-neuregulin-4, membrane-bound isoform (115 aa).

Topologically, residues 1 to 62 (MPTDHEQPCG…SSIPSESNLS (62 aa)) are extracellular. The EGF-like domain occupies 5–46 (HEQPCGPRHRSFCLNGGICYVIPTIPSPFCRCIENYTGARCE). Cystine bridges form between Cys9–Cys23, Cys17–Cys34, and Cys36–Cys45. N-linked (GlcNAc...) asparagine glycans are attached at residues Asn39 and Asn60. The chain crosses the membrane as a helical span at residues 63–83 (AAFVVLAVLLTLTIAALCFLC). Over 84–115 (RKGHLQRASSVQCEISLVETNNTRTRHSHREH) the chain is Cytoplasmic.

Belongs to the neuregulin family. Interacts with ERBB4. Post-translationally, proteolytic cleavage close to the plasma membrane on the external face leads to the release of the soluble growth factor form. In terms of processing, extensive glycosylation precedes the proteolytic cleavage. In terms of tissue distribution, highly expressed in pancreas; weakly expressed in muscle.

Its subcellular location is the cell membrane. The protein resides in the secreted. Functionally, low affinity ligand for the ERBB4 tyrosine kinase receptor. Concomitantly recruits ERBB1 and ERBB2 coreceptors, resulting in ligand-stimulated tyrosine phosphorylation and activation of the ERBB receptors. Does not bind to the ERBB1, ERBB2 and ERBB3 receptors. The polypeptide is Pro-neuregulin-4, membrane-bound isoform (Nrg4) (Mus musculus (Mouse)).